Reading from the N-terminus, the 304-residue chain is Acetylglutamate kinase (304 aa).

Substrate is bound by residues 82 to 83 (GG), R104, and N197.

This sequence belongs to the acetylglutamate kinase family. ArgB subfamily.

The protein resides in the cytoplasm. It carries out the reaction N-acetyl-L-glutamate + ATP = N-acetyl-L-glutamyl 5-phosphate + ADP. The protein operates within amino-acid biosynthesis; L-arginine biosynthesis; N(2)-acetyl-L-ornithine from L-glutamate: step 2/4. In terms of biological role, catalyzes the ATP-dependent phosphorylation of N-acetyl-L-glutamate. The protein is Acetylglutamate kinase of Prochlorococcus marinus (strain NATL2A).